Here is a 206-residue protein sequence, read N- to C-terminus: Small ribosomal subunit protein uS4 (206 aa).

The segment covering 1-16 (MTKRQESKYKIDRRMG) has biased composition (basic and acidic residues). The interval 1–46 (MTKRQESKYKIDRRMGENIWGRPKSPVNRREYGPGQHGQRRKGKLS) is disordered. The region spanning 94 to 154 (RRLDAVVYRA…EKSKQLAIVL (61 aa)) is the S4 RNA-binding domain.

This sequence belongs to the universal ribosomal protein uS4 family. In terms of assembly, part of the 30S ribosomal subunit. Contacts protein S5. The interaction surface between S4 and S5 is involved in control of translational fidelity.

In terms of biological role, one of the primary rRNA binding proteins, it binds directly to 16S rRNA where it nucleates assembly of the body of the 30S subunit. Functionally, with S5 and S12 plays an important role in translational accuracy. The protein is Small ribosomal subunit protein uS4 of Parvibaculum lavamentivorans (strain DS-1 / DSM 13023 / NCIMB 13966).